A 441-amino-acid chain; its full sequence is Xylose isomerase 1 (441 aa).

Catalysis depends on residues His105 and Asp108. Mg(2+) is bound by residues Glu236, Glu272, His275, Asp300, Asp311, Asp313, and Asp343.

The protein belongs to the xylose isomerase family. In terms of assembly, homotetramer. Mg(2+) is required as a cofactor.

The protein localises to the cytoplasm. It catalyses the reaction alpha-D-xylose = alpha-D-xylulofuranose. This chain is Xylose isomerase 1 (xylA1), found in Xanthomonas axonopodis pv. citri (strain 306).